The sequence spans 318 residues: Retinol dehydrogenase 5 (318 aa).

Residues 1–21 (MWLPLLLGALLWAVLWLLRDR) form a helical membrane-spanning segment. Residues 22 to 288 (QSLPASNAFV…TRYSPGWDAK (267 aa)) are Lumenal-facing. 32–56 (FITGCDSGFGRLLALQLDQRGFRVL) contributes to the NADP(+) binding site. Asn-160 carries N-linked (GlcNAc...) asparagine glycosylation. Ser-163 contacts substrate. The active-site Proton acceptor is Tyr-175. A helical transmembrane segment spans residues 289–309 (LLWLPASYLPASLVDAVLTWV). The Cytoplasmic segment spans residues 310-318 (LPKPAQAVY).

This sequence belongs to the short-chain dehydrogenases/reductases (SDR) family. As to quaternary structure, homodimer. In terms of tissue distribution, widely expressed. In the eye, abundant in the retinal pigment epithelium.

The protein localises to the endoplasmic reticulum membrane. The enzyme catalyses 11-cis-retinol + NAD(+) = 11-cis-retinal + NADH + H(+). It carries out the reaction 9-cis-retinol + NAD(+) = 9-cis-retinal + NADH + H(+). The catalysed reaction is 13-cis-retinol + NAD(+) = 13-cis-retinal + NADH + H(+). It catalyses the reaction androsterone + NAD(+) = 5alpha-androstan-3,17-dione + NADH + H(+). The enzyme catalyses 5alpha-androstane-3alpha,17beta-diol + NAD(+) = 17beta-hydroxy-5alpha-androstan-3-one + NADH + H(+). It participates in cofactor metabolism; retinol metabolism. Inhibited by 9-cis-, 13-cis- and all-trans-retinoic acids, with the most potent inhibitor being 13-cis-retinoic acid. Weakly inhibited by oleic acid. Catalyzes the oxidation of cis-isomers of retinol, including 11-cis-, 9-cis-, and 13-cis-retinol in an NAD-dependent manner. Has no activity towards all-trans retinal. Plays a significant role in 11-cis retinol oxidation in the retinal pigment epithelium cells (RPE). Also recognizes steroids (androsterone, androstanediol) as its substrates. The polypeptide is Retinol dehydrogenase 5 (Homo sapiens (Human)).